The following is a 43-amino-acid chain: Thymosin beta-b (43 aa).

Composition is skewed to basic and acidic residues over residues 1-25 (MADK…ETQE) and 33-43 (ETIEQEKQCEA). The tract at residues 1–43 (MADKPDISEVSQFDKTKLKKTETQEKNTLPTKETIEQEKQCEA) is disordered.

The protein belongs to the thymosin beta family.

The protein localises to the cytoplasm. It localises to the cytoskeleton. Plays an important role in the organization of the cytoskeleton. Binds to and sequesters actin monomers (G actin) and therefore inhibits actin polymerization. The polypeptide is Thymosin beta-b (Cyprinus carpio (Common carp)).